The primary structure comprises 1065 residues: Valine--tRNA ligase, mitochondrial (1065 aa).

The transit peptide at 1–15 (MPHLPLASFRPPLWG) directs the protein to the mitochondrion. Residues 27 to 52 (ALCTQPEPHGSPVSRRNREAKQKRLR) are disordered. Residues 42–52 (RNREAKQKRLR) are compositionally biased toward basic and acidic residues. Positions 146–156 (PNVTGSLHIGH) match the 'HIGH' region motif. The 'KMSKS' region motif lies at 659–663 (KMSKS). Lysine 662 is a binding site for ATP.

This sequence belongs to the class-I aminoacyl-tRNA synthetase family.

The protein resides in the mitochondrion. It catalyses the reaction tRNA(Val) + L-valine + ATP = L-valyl-tRNA(Val) + AMP + diphosphate. Catalyzes the attachment of valine to tRNA(Val) in a two-step reaction: valine is first activated by ATP to form Val-AMP and then transferred to the acceptor end of tRNA(Val). This is Valine--tRNA ligase, mitochondrial (Vars2) from Rattus norvegicus (Rat).